Here is a 267-residue protein sequence, read N- to C-terminus: uncharacterized protein (267 aa).

Residues phenylalanine 30 to isoleucine 52 form a helical membrane-spanning segment.

The protein resides in the membrane. This is an uncharacterized protein from Aquifex aeolicus (strain VF5).